The primary structure comprises 30 residues: Cysteine-rich venom protein mossambin (30 aa).

The interval 1 to 30 is disordered; the sequence is NVDFNSESTRRKKKQNEIVDLHNSLRRTVN.

Belongs to the CRISP family. Post-translationally, contains 8 disulfide bonds. As to expression, expressed by the venom gland.

Its subcellular location is the secreted. Functionally, inhibits calcium-activated potassium channels (KCa), voltage-gated potassium channel (Kv), and the calcium release channel/ryanodine receptor (RyR). This is Cysteine-rich venom protein mossambin from Naja mossambica (Mozambique spitting cobra).